Consider the following 255-residue polypeptide: Hydroxyacylglutathione hydrolase (255 aa).

7 residues coordinate Zn(2+): His-52, His-54, Asp-56, His-57, His-108, Asp-130, and His-168.

Belongs to the metallo-beta-lactamase superfamily. Glyoxalase II family. As to quaternary structure, monomer. Requires Zn(2+) as cofactor.

The enzyme catalyses an S-(2-hydroxyacyl)glutathione + H2O = a 2-hydroxy carboxylate + glutathione + H(+). Its pathway is secondary metabolite metabolism; methylglyoxal degradation; (R)-lactate from methylglyoxal: step 2/2. In terms of biological role, thiolesterase that catalyzes the hydrolysis of S-D-lactoyl-glutathione to form glutathione and D-lactic acid. This Albidiferax ferrireducens (strain ATCC BAA-621 / DSM 15236 / T118) (Rhodoferax ferrireducens) protein is Hydroxyacylglutathione hydrolase.